The sequence spans 139 residues: Large ribosomal subunit protein uL22 (139 aa).

A disordered region spans residues 1–21 (MTAPEQTYRNKKQRKQQHKLR). Basic residues predominate over residues 9–21 (RNKKQRKQQHKLR).

Belongs to the universal ribosomal protein uL22 family. Part of the 50S ribosomal subunit.

Its function is as follows. This protein binds specifically to 23S rRNA; its binding is stimulated by other ribosomal proteins, e.g. L4, L17, and L20. It is important during the early stages of 50S assembly. It makes multiple contacts with different domains of the 23S rRNA in the assembled 50S subunit and ribosome. Functionally, the globular domain of the protein is located near the polypeptide exit tunnel on the outside of the subunit, while an extended beta-hairpin is found that lines the wall of the exit tunnel in the center of the 70S ribosome. The sequence is that of Large ribosomal subunit protein uL22 from Deinococcus geothermalis (strain DSM 11300 / CIP 105573 / AG-3a).